The sequence spans 1524 residues: Protein dispatched homolog 1 (1524 aa).

A glycan (N-linked (GlcNAc...) asparagine) is linked at Asn-59. A run of 4 helical transmembrane segments spans residues 190–210 (VVVLGMCTMFIVVCALVGVLV), 500–520 (LLMDTVYPAIAIVIVLLVMCV), 525–545 (MFITLMTMFAIISSLIVSYFL), and 549–569 (VFHFEFFPFMNLTALIILVGI). An SSD domain is found at 486-658 (GIEFGIKHSL…VTWLPAVVVL (173 aa)). Residue Asn-582 is glycosylated (N-linked (GlcNAc...) asparagine). 8 helical membrane passes run 604–624 (AALSMFVTSFTTAAAFYANYV), 638–658 (GTAILVNYVLMVTWLPAVVVL), 719–739 (YLWLFWFLALTVGGAYIVCIN), 988–1008 (MGLSVAVAFSVMLLTTWNIII), 1010–1030 (LYAIISIAGTIFVTVGSLVLL), 1040–1060 (VTISVAVGLSVDFAVHYGVAY), 1079–1099 (VGSAMAMAALTTFVAGAMMMP), and 1107–1127 (QLGTFMMLIMCISWAFATFFF).

It belongs to the dispatched family. Interacts with SHH via the cholesterol anchor of the dually lipid-modified SHH (ShhNp).

It is found in the membrane. Functions in hedgehog (Hh) signaling. Regulates the release and extracellular accumulation of cholesterol-modified hedgehog proteins and is hence required for effective production of the Hh signal. Synergizes with SCUBE2 to cause an increase in SHH secretion. In Homo sapiens (Human), this protein is Protein dispatched homolog 1 (DISP1).